Reading from the N-terminus, the 500-residue chain is Serine/threonine protein phosphatase 2A 57 kDa regulatory subunit B' kappa isoform (500 aa).

The interval 1–53 (MFKQFLSKLPRKSSKSDSGELNRSSSGPVSSPVQRSGTSGGGSGPVRSNSGKR) is disordered. Polar residues predominate over residues 21 to 37 (LNRSSSGPVSSPVQRSG).

Belongs to the phosphatase 2A regulatory subunit B56 family. In terms of assembly, PP2A consists of a common heteromeric enzyme, composed of a catalytic subunit (subunits C), a constant regulatory subunit (subunit A), and a variety of regulatory subunits such as subunits B (the R2/B/PR55/B55, R3/B''/PR72/PR130/PR59 and R5/B'/B56 families).

It localises to the cytoplasm. The B regulatory subunit may modulate substrate selectivity and catalytic activity, and may also direct the localization of the catalytic enzyme to a particular subcellular compartment. In Arabidopsis thaliana (Mouse-ear cress), this protein is Serine/threonine protein phosphatase 2A 57 kDa regulatory subunit B' kappa isoform (B'KAPPA).